Here is a 675-residue protein sequence, read N- to C-terminus: PTS system glucose-specific EIICBA component (675 aa).

A PTS EIIC type-1 domain is found at K3–D414. Transmembrane regions (helical) follow at residues L16–F36, M59–V79, I81–L101, V126–A146, F170–W190, L211–I231, F273–Y293, V303–P323, F328–L348, V355–P375, and T378–F398. Positions S425–K506 constitute a PTS EIIB type-1 domain. C447 (phosphocysteine intermediate; for EIIB activity) is an active-site residue. In terms of domain architecture, PTS EIIA type-1 spans D547–N651. Catalysis depends on H599, which acts as the Tele-phosphohistidine intermediate; for EIIA activity.

It localises to the cell membrane. It catalyses the reaction N(pros)-phospho-L-histidyl-[protein] + D-glucose(out) = D-glucose 6-phosphate(in) + L-histidyl-[protein]. In terms of biological role, the phosphoenolpyruvate-dependent sugar phosphotransferase system (sugar PTS), a major carbohydrate active transport system, catalyzes the phosphorylation of incoming sugar substrates concomitantly with their translocation across the cell membrane. This system is involved in glucose transport. The chain is PTS system glucose-specific EIICBA component (ptsG) from Staphylococcus epidermidis.